We begin with the raw amino-acid sequence, 265 residues long: HUWE1-associated protein modifying stress responses (265 aa).

Disordered regions lie at residues 1–22 (MEEK…HWFS), 140–173 (GKAP…SVET), and 194–219 (ISMR…RRNG). Residues 147–172 (SSRAPPRLAMVSPSRSTPSETSSSVE) are compositionally biased toward low complexity.

It belongs to the HAPSTR1 family. As to quaternary structure, oligomer.

The protein localises to the nucleus. It is found in the cytoplasm. Its function is as follows. Acts as a central player within a network of stress response pathways promoting cellular adaptability. Functions as a negative regulator of TP53/P53 in the cellular response to telomere erosion and probably also DNA damage. In Danio rerio (Zebrafish), this protein is HUWE1-associated protein modifying stress responses.